The primary structure comprises 126 residues: Large ribosomal subunit protein bL20c (126 aa).

It belongs to the bacterial ribosomal protein bL20 family.

Its subcellular location is the plastid. It localises to the chloroplast. Binds directly to 23S ribosomal RNA and is necessary for the in vitro assembly process of the 50S ribosomal subunit. It is not involved in the protein synthesizing functions of that subunit. The chain is Large ribosomal subunit protein bL20c from Guizotia abyssinica (Niger).